We begin with the raw amino-acid sequence, 117 residues long: MTRVKRGYIARRRRTKIRLFASSFRGAHSRLTRTITQQKMRALVSAYRDRGRQKRDFRRLWITRINAVTRENEVSYSYIRLIHNLYKRQLLLNRKILAQIAILNKNCLHIISKKIIK.

This sequence belongs to the bacterial ribosomal protein bL20 family.

It localises to the plastid. It is found in the chloroplast. In terms of biological role, binds directly to 23S ribosomal RNA and is necessary for the in vitro assembly process of the 50S ribosomal subunit. It is not involved in the protein synthesizing functions of that subunit. This Lemna minor (Common duckweed) protein is Large ribosomal subunit protein bL20c.